The primary structure comprises 94 residues: Protein translocase subunit SecE (94 aa).

The segment at 1–32 is disordered; that stretch reads MTDAVGSIDMPDAQDEAPDSKKSRKGGKRGKK. A compositionally biased stretch (basic residues) spans 22 to 32; the sequence is KSRKGGKRGKK. Residues 65-85 form a helical membrane-spanning segment; it reads TVVIIFVVIMIGLVTLIDYGF.

This sequence belongs to the SecE/SEC61-gamma family. As to quaternary structure, component of the Sec protein translocase complex. Heterotrimer consisting of SecY, SecE and SecG subunits. The heterotrimers can form oligomers, although 1 heterotrimer is thought to be able to translocate proteins. Interacts with the ribosome. Interacts with SecDF, and other proteins may be involved. Interacts with SecA.

The protein localises to the cell membrane. Its function is as follows. Essential subunit of the Sec protein translocation channel SecYEG. Clamps together the 2 halves of SecY. May contact the channel plug during translocation. In Streptomyces lividans, this protein is Protein translocase subunit SecE.